We begin with the raw amino-acid sequence, 459 residues long: Serine--tRNA ligase (459 aa).

L-serine is bound at residue 254–256 (TAE). ATP contacts are provided by residues 285 to 287 (RKE) and Val-301. L-serine is bound at residue Glu-308. Residue 372–375 (EMVS) coordinates ATP. Thr-408 serves as a coordination point for L-serine.

The protein belongs to the class-II aminoacyl-tRNA synthetase family. Type-1 seryl-tRNA synthetase subfamily. Homodimer. The tRNA molecule binds across the dimer.

Its subcellular location is the cytoplasm. It catalyses the reaction tRNA(Ser) + L-serine + ATP = L-seryl-tRNA(Ser) + AMP + diphosphate + H(+). The enzyme catalyses tRNA(Sec) + L-serine + ATP = L-seryl-tRNA(Sec) + AMP + diphosphate + H(+). It functions in the pathway aminoacyl-tRNA biosynthesis; selenocysteinyl-tRNA(Sec) biosynthesis; L-seryl-tRNA(Sec) from L-serine and tRNA(Sec): step 1/1. Functionally, catalyzes the attachment of serine to tRNA(Ser). Is also able to aminoacylate tRNA(Sec) with serine, to form the misacylated tRNA L-seryl-tRNA(Sec), which will be further converted into selenocysteinyl-tRNA(Sec). This is Serine--tRNA ligase from Desulfurococcus amylolyticus (strain DSM 18924 / JCM 16383 / VKM B-2413 / 1221n) (Desulfurococcus kamchatkensis).